The primary structure comprises 200 residues: Peptidyl-tRNA hydrolase (200 aa).

Phenylalanine 16 is a binding site for tRNA. Histidine 21 (proton acceptor) is an active-site residue. TRNA-binding residues include phenylalanine 67, asparagine 69, and asparagine 115.

The protein belongs to the PTH family. In terms of assembly, monomer.

It is found in the cytoplasm. It carries out the reaction an N-acyl-L-alpha-aminoacyl-tRNA + H2O = an N-acyl-L-amino acid + a tRNA + H(+). Functionally, hydrolyzes ribosome-free peptidyl-tRNAs (with 1 or more amino acids incorporated), which drop off the ribosome during protein synthesis, or as a result of ribosome stalling. Catalyzes the release of premature peptidyl moieties from peptidyl-tRNA molecules trapped in stalled 50S ribosomal subunits, and thus maintains levels of free tRNAs and 50S ribosomes. This Prochlorococcus marinus (strain MIT 9215) protein is Peptidyl-tRNA hydrolase.